A 124-amino-acid polypeptide reads, in one-letter code: Seripauperin-23 (124 aa).

The N-terminal stretch at 1–20 (MVKLTSIVAGVAAIAAGVAA) is a signal peptide.

This sequence belongs to the SRP1/TIP1 family. Seripauperin subfamily. In terms of processing, O-glycosylated.

It localises to the secreted. The protein resides in the cell wall. Its function is as follows. Component of the cell wall. The protein is Seripauperin-23 (PAU23) of Saccharomyces cerevisiae (strain ATCC 204508 / S288c) (Baker's yeast).